The primary structure comprises 58 residues: MAVPKRKKSKAKTAMRRAQWKLKMPGLSICPECGQPKAPHRVCSNCGYYKNKEVIEVV.

It belongs to the bacterial ribosomal protein bL32 family.

The polypeptide is Large ribosomal subunit protein bL32 (Sulfurihydrogenibium sp. (strain YO3AOP1)).